A 195-amino-acid chain; its full sequence is Peptidyl-tRNA hydrolase (195 aa).

TRNA is bound at residue Y17. H22 functions as the Proton acceptor in the catalytic mechanism. TRNA-binding residues include F68, N70, and N116.

This sequence belongs to the PTH family. In terms of assembly, monomer.

Its subcellular location is the cytoplasm. The enzyme catalyses an N-acyl-L-alpha-aminoacyl-tRNA + H2O = an N-acyl-L-amino acid + a tRNA + H(+). Hydrolyzes ribosome-free peptidyl-tRNAs (with 1 or more amino acids incorporated), which drop off the ribosome during protein synthesis, or as a result of ribosome stalling. In terms of biological role, catalyzes the release of premature peptidyl moieties from peptidyl-tRNA molecules trapped in stalled 50S ribosomal subunits, and thus maintains levels of free tRNAs and 50S ribosomes. In Pectobacterium atrosepticum (strain SCRI 1043 / ATCC BAA-672) (Erwinia carotovora subsp. atroseptica), this protein is Peptidyl-tRNA hydrolase.